Here is a 270-residue protein sequence, read N- to C-terminus: UPF0354 protein BCAH187_A4826 (270 aa).

Belongs to the UPF0354 family.

The polypeptide is UPF0354 protein BCAH187_A4826 (Bacillus cereus (strain AH187)).